Consider the following 1577-residue polypeptide: Probable serine/threonine-protein kinase gdt9 (1577 aa).

The signal sequence occupies residues 1–16 (MKTFLLIFLLICVCKG). Topologically, residues 17–966 (ITNITTPSIY…NNEDNHKKLV (950 aa)) are extracellular. A helical transmembrane segment spans residues 967 to 987 (IALSVSIPVAALLVILCFGIF). Over 988–1577 (ICYNNNKKNK…SLVKIFKRFN (590 aa)) the chain is Cytoplasmic. The span at 998–1014 (NETKGKDIETNTDKKDD) shows a compositional bias: basic and acidic residues. Disordered stretches follow at residues 998 to 1019 (NETK…NENE) and 1050 to 1128 (TLPP…FPTI). Residues 1050–1082 (TLPPQSTISIDTSPSSENTTFTESLTPKKSATV) are compositionally biased toward polar residues. Positions 1091-1115 (NSTNESTVSNSSSENNSDNNNNNNN) are enriched in low complexity. A Protein kinase domain is found at 1290–1573 (LDFDEICGQG…EIVFSLVKIF (284 aa)). ATP is bound by residues 1296–1304 (CGQGTYGMV) and K1317. D1436 (proton acceptor) is an active-site residue.

This sequence in the N-terminal section; belongs to the GDT family. In the C-terminal section; belongs to the protein kinase superfamily. TKL Ser/Thr protein kinase family.

Its subcellular location is the membrane. The catalysed reaction is L-seryl-[protein] + ATP = O-phospho-L-seryl-[protein] + ADP + H(+). It catalyses the reaction L-threonyl-[protein] + ATP = O-phospho-L-threonyl-[protein] + ADP + H(+). The sequence is that of Probable serine/threonine-protein kinase gdt9 (gdt9) from Dictyostelium discoideum (Social amoeba).